Reading from the N-terminus, the 309-residue chain is NAD kinase (309 aa).

The Proton acceptor role is filled by aspartate 89. Residues 89 to 90 (DG), 163 to 164 (NE), histidine 174, arginine 191, aspartate 193, and 204 to 209 (TAYALS) contribute to the NAD(+) site.

The protein belongs to the NAD kinase family. Requires a divalent metal cation as cofactor.

The protein resides in the cytoplasm. It carries out the reaction NAD(+) + ATP = ADP + NADP(+) + H(+). Its function is as follows. Involved in the regulation of the intracellular balance of NAD and NADP, and is a key enzyme in the biosynthesis of NADP. Catalyzes specifically the phosphorylation on 2'-hydroxyl of the adenosine moiety of NAD to yield NADP. In Shewanella sp. (strain ANA-3), this protein is NAD kinase.